Reading from the N-terminus, the 461-residue chain is Deoxyguanosinetriphosphate triphosphohydrolase-like protein (461 aa).

A disordered region spans residues 22–41 (ERFLPDPPREKDNRPPFRRD). Over residues 24–41 (FLPDPPREKDNRPPFRRD) the composition is skewed to basic and acidic residues. One can recognise an HD domain in the interval 72–285 (RLTHSLEVAQ…MELADDIAYG (214 aa)).

Belongs to the dGTPase family. Type 2 subfamily.

The protein is Deoxyguanosinetriphosphate triphosphohydrolase-like protein of Haemophilus influenzae (strain PittEE).